A 453-amino-acid chain; its full sequence is uncharacterized protein (453 aa).

Cysteine 74, cysteine 80, cysteine 83, and cysteine 162 together coordinate [4Fe-4S] cluster. Positions 286, 315, 336, and 384 each coordinate S-adenosyl-L-methionine. Residue cysteine 411 is the Nucleophile of the active site.

Belongs to the class I-like SAM-binding methyltransferase superfamily. RNA M5U methyltransferase family.

This is an uncharacterized protein from Staphylococcus aureus (strain MRSA252).